The following is a 208-amino-acid chain: Ribosomal RNA large subunit methyltransferase E (208 aa).

Positions 63, 65, 83, 99, and 124 each coordinate S-adenosyl-L-methionine. Lys-164 serves as the catalytic Proton acceptor.

It belongs to the class I-like SAM-binding methyltransferase superfamily. RNA methyltransferase RlmE family.

The protein localises to the cytoplasm. The catalysed reaction is uridine(2552) in 23S rRNA + S-adenosyl-L-methionine = 2'-O-methyluridine(2552) in 23S rRNA + S-adenosyl-L-homocysteine + H(+). Specifically methylates the uridine in position 2552 of 23S rRNA at the 2'-O position of the ribose in the fully assembled 50S ribosomal subunit. This chain is Ribosomal RNA large subunit methyltransferase E, found in Salmonella agona (strain SL483).